A 567-amino-acid chain; its full sequence is Proline--tRNA ligase (567 aa).

It belongs to the class-II aminoacyl-tRNA synthetase family. ProS type 1 subfamily. In terms of assembly, homodimer.

The protein localises to the cytoplasm. It catalyses the reaction tRNA(Pro) + L-proline + ATP = L-prolyl-tRNA(Pro) + AMP + diphosphate. In terms of biological role, catalyzes the attachment of proline to tRNA(Pro) in a two-step reaction: proline is first activated by ATP to form Pro-AMP and then transferred to the acceptor end of tRNA(Pro). As ProRS can inadvertently accommodate and process non-cognate amino acids such as alanine and cysteine, to avoid such errors it has two additional distinct editing activities against alanine. One activity is designated as 'pretransfer' editing and involves the tRNA(Pro)-independent hydrolysis of activated Ala-AMP. The other activity is designated 'posttransfer' editing and involves deacylation of mischarged Ala-tRNA(Pro). The misacylated Cys-tRNA(Pro) is not edited by ProRS. In Streptomyces griseus subsp. griseus (strain JCM 4626 / CBS 651.72 / NBRC 13350 / KCC S-0626 / ISP 5235), this protein is Proline--tRNA ligase.